The sequence spans 293 residues: 4-diphosphocytidyl-2-C-methyl-D-erythritol kinase (293 aa).

The active site involves Lys10. Position 96 to 106 (96 to 106) interacts with ATP; that stretch reads PIAAGLGGGSS. The active site involves Asp138.

This sequence belongs to the GHMP kinase family. IspE subfamily.

The enzyme catalyses 4-CDP-2-C-methyl-D-erythritol + ATP = 4-CDP-2-C-methyl-D-erythritol 2-phosphate + ADP + H(+). It functions in the pathway isoprenoid biosynthesis; isopentenyl diphosphate biosynthesis via DXP pathway; isopentenyl diphosphate from 1-deoxy-D-xylulose 5-phosphate: step 3/6. Its function is as follows. Catalyzes the phosphorylation of the position 2 hydroxy group of 4-diphosphocytidyl-2C-methyl-D-erythritol. The sequence is that of 4-diphosphocytidyl-2-C-methyl-D-erythritol kinase from Caulobacter sp. (strain K31).